A 479-amino-acid chain; its full sequence is GMP reductase (479 aa).

2 consecutive CBS domains span residues 96–153 and 154–212; these read VLDT…VRDI and AVTD…ATDS. Residues 246–248 and 296–298 each bind NADP(+); these read DTA and GVG. The Thioimidate intermediate role is filled by cysteine 303.

Belongs to the IMPDH/GMPR family. GuaB1 subfamily. The cofactor is a monovalent cation.

The enzyme catalyses IMP + NH4(+) + NADP(+) = GMP + NADPH + 2 H(+). Its pathway is purine metabolism; IMP biosynthesis via salvage pathway. In terms of biological role, involved in the purine-salvage pathway. Catalyzes the NADPH-dependent conversion of GMP to IMP. The chain is GMP reductase from Mycobacterium bovis (strain ATCC BAA-935 / AF2122/97).